A 903-amino-acid polypeptide reads, in one-letter code: Protein translocase subunit SecA (903 aa).

ATP is bound by residues Gln-87, 105–109 (GEGKT), and Asp-512. 4 residues coordinate Zn(2+): Cys-887, Cys-889, Cys-898, and His-899.

Belongs to the SecA family. As to quaternary structure, monomer and homodimer. Part of the essential Sec protein translocation apparatus which comprises SecA, SecYEG and auxiliary proteins SecDF-YajC and YidC. Zn(2+) is required as a cofactor.

The protein resides in the cell inner membrane. It is found in the cytoplasm. It carries out the reaction ATP + H2O + cellular proteinSide 1 = ADP + phosphate + cellular proteinSide 2.. Part of the Sec protein translocase complex. Interacts with the SecYEG preprotein conducting channel. Has a central role in coupling the hydrolysis of ATP to the transfer of proteins into and across the cell membrane, serving both as a receptor for the preprotein-SecB complex and as an ATP-driven molecular motor driving the stepwise translocation of polypeptide chains across the membrane. The chain is Protein translocase subunit SecA from Photorhabdus laumondii subsp. laumondii (strain DSM 15139 / CIP 105565 / TT01) (Photorhabdus luminescens subsp. laumondii).